Consider the following 337-residue polypeptide: Ribosomal RNA small subunit methyltransferase H (337 aa).

Residues 36–38 (GGH), D56, F82, D100, and Q107 each bind S-adenosyl-L-methionine. Positions 314-337 (GLERRSGRIPNPRSPIPASQGDAR) are disordered.

Belongs to the methyltransferase superfamily. RsmH family.

Its subcellular location is the cytoplasm. It carries out the reaction cytidine(1402) in 16S rRNA + S-adenosyl-L-methionine = N(4)-methylcytidine(1402) in 16S rRNA + S-adenosyl-L-homocysteine + H(+). Its function is as follows. Specifically methylates the N4 position of cytidine in position 1402 (C1402) of 16S rRNA. The sequence is that of Ribosomal RNA small subunit methyltransferase H from Xanthomonas oryzae pv. oryzae (strain PXO99A).